Here is a 397-residue protein sequence, read N- to C-terminus: Citrate synthase (397 aa).

Active-site residues include His266 and Asp320.

This sequence belongs to the citrate synthase family.

The enzyme catalyses oxaloacetate + acetyl-CoA + H2O = citrate + CoA + H(+). It functions in the pathway carbohydrate metabolism; tricarboxylic acid cycle; isocitrate from oxaloacetate: step 1/2. The protein is Citrate synthase (gltA) of Synechocystis sp. (strain ATCC 27184 / PCC 6803 / Kazusa).